The sequence spans 976 residues: Ephrin type-A receptor 1 (976 aa).

An N-terminal signal peptide occupies residues 1–25; it reads MERRWPLGLGLVLLLCAPLPPGARA. Residues 26 to 547 are Extracellular-facing; sequence KEVTLMDTSK…PVSRGLTGGE (522 aa). Positions 27 to 209 constitute an Eph LBD domain; it reads EVTLMDTSKA…FYQRCPETLN (183 aa). 2 consecutive Fibronectin type-III domains span residues 332–445 and 447–538; these read PPSA…MGHA and SLSG…TSPP. N-linked (GlcNAc...) asparagine glycosylation occurs at asparagine 414. Residues 548–568 traverse the membrane as a helical segment; sequence IVAVIFGLLLGAALLLGILVF. Topologically, residues 569-976 are cytoplasmic; it reads RSRRAQRQRQ…ILCSIQGFKD (408 aa). A phosphotyrosine; by autocatalysis mark is found at tyrosine 599 and tyrosine 605. One can recognise a Protein kinase domain in the interval 624–884; sequence LMVDTVIGEG…KLQAHLEQLL (261 aa). Residues 630–638 and lysine 656 each bind ATP; that span reads IGEGEFGEV. Residue aspartate 749 is the Proton acceptor of the active site. Tyrosine 781 carries the phosphotyrosine; by autocatalysis modification. Serine 906 and serine 910 each carry phosphoserine. The SAM domain maps to 913-976; sequence IPYRTVSEWL…ILCSIQGFKD (64 aa). A Phosphotyrosine; by autocatalysis modification is found at tyrosine 930. The PDZ-binding signature appears at 974-976; sequence FKD.

The protein belongs to the protein kinase superfamily. Tyr protein kinase family. Ephrin receptor subfamily. In terms of assembly, homodimer. Forms a signaling complex with LCK; PTK2B/PYK2 and PI3-kinase upon activation by EFNA1; regulates T-lymphocytes migration. Interacts (via SAM domain) with ILK (via ANK repeats); stimulated by EFNA1 but independent of the kinase activity of EPHA1. Interacts (kinase activity-dependent) with PTK2/FAK1. In terms of processing, phosphorylated. Autophosphorylation is stimulated by its ligand EFNA1. Post-translationally, ubiquitinated. Overexpressed in several carcinomas.

Its subcellular location is the cell membrane. It catalyses the reaction L-tyrosyl-[protein] + ATP = O-phospho-L-tyrosyl-[protein] + ADP + H(+). Receptor tyrosine kinase which binds promiscuously membrane-bound ephrin-A family ligands residing on adjacent cells, leading to contact-dependent bidirectional signaling into neighboring cells. The signaling pathway downstream of the receptor is referred to as forward signaling while the signaling pathway downstream of the ephrin ligand is referred to as reverse signaling. Binds with a low affinity EFNA3 and EFNA4 and with a high affinity to EFNA1 which most probably constitutes its cognate/functional ligand. Upon activation by EFNA1 induces cell attachment to the extracellular matrix inhibiting cell spreading and motility through regulation of ILK and downstream RHOA and RAC. Also plays a role in angiogenesis and regulates cell proliferation. May play a role in apoptosis. The sequence is that of Ephrin type-A receptor 1 (EPHA1) from Homo sapiens (Human).